Reading from the N-terminus, the 123-residue chain is MIVGIGIDVVYIPRILNLWKKFGNKFLKKVFSQEEIKDSNKYTSCEGKARHFAKRFAAKEAYVKALGTGFGKSIKMSDITTYNTLHGKPQITVKKSNIDYKAELSLSDDTDYAIAFIILHKES.

Residues Asp8 and Glu60 each contribute to the Mg(2+) site.

This sequence belongs to the P-Pant transferase superfamily. AcpS family. Mg(2+) is required as a cofactor.

The protein localises to the cytoplasm. It catalyses the reaction apo-[ACP] + CoA = holo-[ACP] + adenosine 3',5'-bisphosphate + H(+). Its function is as follows. Transfers the 4'-phosphopantetheine moiety from coenzyme A to a Ser of acyl-carrier-protein. This is Holo-[acyl-carrier-protein] synthase from Ehrlichia ruminantium (strain Gardel).